A 492-amino-acid chain; its full sequence is Auxin transporter-like protein 1 (492 aa).

Residues 1–67 (MVPREQAEEA…DAWFSCASNQ (67 aa)) are Cytoplasmic-facing. The chain crosses the membrane as a helical span at residues 68-85 (VAQVLLTLPYSFSQLGML). The Extracellular segment spans residues 86–87 (SG). A helical membrane pass occupies residues 88 to 108 (VLLQLFYGFMGSWTAYLISVL). Residues 109–143 (YVEYRSRKEKEGVSFKNHVIQWFEVLDGLLGPYWK) are Cytoplasmic-facing. The helical transmembrane segment at 144 to 164 (AAGLAFNCTFLLFGSVIQLIA) threads the bilayer. Residues 165-180 (CASNIYYINDRLDKRT) are Extracellular-facing. Residues 181–201 (WTYIFGACCATTVFIPSFHNY) traverse the membrane as a helical segment. R202 is a topological domain (cytoplasmic). A helical membrane pass occupies residues 203–223 (IWSFLGLGMTTYTAWYLAIAA). The Extracellular segment spans residues 224-240 (LLNGQAEGITHTGPTKL). The chain crosses the membrane as a helical span at residues 241-261 (VLYFTGATNILYTFGGHAVTV). Topologically, residues 262-274 (EIMHAMWKPAKFK) are cytoplasmic. Residues 275 to 295 (YIYLLATLYVFTLTLPSASAM) traverse the membrane as a helical segment. Topologically, residues 296–322 (YWAFGDELLTHSNAFSLLPKTGWRDAA) are extracellular. A helical membrane pass occupies residues 323 to 343 (VILMLIHQFITFGFACTPLYF). At 344-364 (VWEKVIGMHDTKSICLRALAR) the chain is on the cytoplasmic side. A helical transmembrane segment spans residues 365 to 385 (LPIVVPIWFLAIIFPFFGPIN). Position 386 (S386) is a topological domain, extracellular. A helical membrane pass occupies residues 387–407 (AVGALLVSFTVYIIPALAHIL). Residues 408–432 (TYRTASARMNAAEKPPFFLPSWTGM) lie on the Cytoplasmic side of the membrane. A helical transmembrane segment spans residues 433-453 (FVLNMFIVVWVLVVGFGLGGW). Residues 454-492 (ASMVNFIRQIDTFGLFAKCYQCPKPAPALAQSPVPLPHH) are Extracellular-facing.

The protein belongs to the amino acid/polyamine transporter 2 family. Amino acid/auxin permease (AAAP) (TC 2.A.18.1) subfamily.

Its subcellular location is the cell membrane. Functionally, carrier protein involved in proton-driven auxin influx. May mediate the formation of auxin gradient from developing leaves (site of auxin biosynthesis) to tips. The polypeptide is Auxin transporter-like protein 1 (Oryza sativa subsp. japonica (Rice)).